A 163-amino-acid polypeptide reads, in one-letter code: 3-isopropylmalate dehydratase small subunit (163 aa).

Belongs to the LeuD family. LeuD type 2 subfamily. As to quaternary structure, heterodimer of LeuC and LeuD.

The catalysed reaction is (2R,3S)-3-isopropylmalate = (2S)-2-isopropylmalate. The protein operates within amino-acid biosynthesis; L-leucine biosynthesis; L-leucine from 3-methyl-2-oxobutanoate: step 2/4. In terms of biological role, catalyzes the isomerization between 2-isopropylmalate and 3-isopropylmalate, via the formation of 2-isopropylmaleate. The polypeptide is 3-isopropylmalate dehydratase small subunit (Brachyspira hyodysenteriae (strain ATCC 49526 / WA1)).